Consider the following 651-residue polypeptide: DNA ligase (651 aa).

Residues aspartate 32–aspartate 36, serine 75–leucine 76, and glutamate 106 contribute to the NAD(+) site. The active-site N6-AMP-lysine intermediate is the lysine 108. NAD(+) contacts are provided by arginine 129, glutamate 164, lysine 271, and lysine 295. Zn(2+) contacts are provided by cysteine 389, cysteine 392, cysteine 405, and cysteine 411. Positions serine 575–cysteine 651 constitute a BRCT domain.

It belongs to the NAD-dependent DNA ligase family. LigA subfamily. Mg(2+) serves as cofactor. Requires Mn(2+) as cofactor.

The catalysed reaction is NAD(+) + (deoxyribonucleotide)n-3'-hydroxyl + 5'-phospho-(deoxyribonucleotide)m = (deoxyribonucleotide)n+m + AMP + beta-nicotinamide D-nucleotide.. Its function is as follows. DNA ligase that catalyzes the formation of phosphodiester linkages between 5'-phosphoryl and 3'-hydroxyl groups in double-stranded DNA using NAD as a coenzyme and as the energy source for the reaction. It is essential for DNA replication and repair of damaged DNA. In Wolbachia pipientis subsp. Culex pipiens (strain wPip), this protein is DNA ligase.